The chain runs to 355 residues: Holliday junction branch migration complex subunit RuvB (355 aa).

The tract at residues 1–43 (MEEMDDFTVRRGEREDITGAAGPPEERPLDPAAFEEDDEPTLR) is disordered. A large ATPase domain (RuvB-L) region spans residues 4 to 203 (MDDFTVRRGE…FGFSARLDYY (200 aa)). Basic and acidic residues predominate over residues 7–17 (FTVRRGEREDI). ATP contacts are provided by residues Leu-42, Arg-43, Gly-84, Lys-87, Thr-88, Ser-89, 150-152 (EDF), Arg-193, Tyr-203, and Arg-240. Thr-88 contributes to the Mg(2+) binding site. Residues 204 to 274 (EPHELEKIVV…TANAALEMQG (71 aa)) are small ATPAse domain (RuvB-S). The segment at 277–355 (HLGLDRTDRE…HLGFPVRDGG (79 aa)) is head domain (RuvB-H). 3 residues coordinate DNA: Arg-313, Arg-332, and Arg-337.

This sequence belongs to the RuvB family. As to quaternary structure, homohexamer. Forms an RuvA(8)-RuvB(12)-Holliday junction (HJ) complex. HJ DNA is sandwiched between 2 RuvA tetramers; dsDNA enters through RuvA and exits via RuvB. An RuvB hexamer assembles on each DNA strand where it exits the tetramer. Each RuvB hexamer is contacted by two RuvA subunits (via domain III) on 2 adjacent RuvB subunits; this complex drives branch migration. In the full resolvosome a probable DNA-RuvA(4)-RuvB(12)-RuvC(2) complex forms which resolves the HJ.

It is found in the cytoplasm. The catalysed reaction is ATP + H2O = ADP + phosphate + H(+). Functionally, the RuvA-RuvB-RuvC complex processes Holliday junction (HJ) DNA during genetic recombination and DNA repair, while the RuvA-RuvB complex plays an important role in the rescue of blocked DNA replication forks via replication fork reversal (RFR). RuvA specifically binds to HJ cruciform DNA, conferring on it an open structure. The RuvB hexamer acts as an ATP-dependent pump, pulling dsDNA into and through the RuvAB complex. RuvB forms 2 homohexamers on either side of HJ DNA bound by 1 or 2 RuvA tetramers; 4 subunits per hexamer contact DNA at a time. Coordinated motions by a converter formed by DNA-disengaged RuvB subunits stimulates ATP hydrolysis and nucleotide exchange. Immobilization of the converter enables RuvB to convert the ATP-contained energy into a lever motion, pulling 2 nucleotides of DNA out of the RuvA tetramer per ATP hydrolyzed, thus driving DNA branch migration. The RuvB motors rotate together with the DNA substrate, which together with the progressing nucleotide cycle form the mechanistic basis for DNA recombination by continuous HJ branch migration. Branch migration allows RuvC to scan DNA until it finds its consensus sequence, where it cleaves and resolves cruciform DNA. In Rubrobacter xylanophilus (strain DSM 9941 / JCM 11954 / NBRC 16129 / PRD-1), this protein is Holliday junction branch migration complex subunit RuvB.